We begin with the raw amino-acid sequence, 364 residues long: Paraneoplastic antigen Ma2 (364 aa).

Position 2 is an N-acetylalanine (A2). The span at 335 to 351 (EEEEASFENESIEEPEE) shows a compositional bias: acidic residues. The tract at residues 335-364 (EEEEASFENESIEEPEERDGYGRWNHEGDD) is disordered. A compositionally biased stretch (basic and acidic residues) spans 352–364 (RDGYGRWNHEGDD).

Belongs to the PNMA family. In terms of tissue distribution, brain-specific. In some cancer patients, specifically expressed by testicular tumor cells.

It is found in the nucleus. The protein resides in the nucleolus. The polypeptide is Paraneoplastic antigen Ma2 (PNMA2) (Homo sapiens (Human)).